Reading from the N-terminus, the 759-residue chain is Arylphorin subunit A4 (759 aa).

Residues 1–16 (MKIAIVLLAIIALVAA) form the signal peptide.

Belongs to the hemocyanin family. As to quaternary structure, heterohexamer. Fat body.

The protein localises to the secreted. Its subcellular location is the extracellular space. In terms of biological role, arylphorin is a larval storage protein (LSP) which may serve as a storage protein used primarily as a source of aromatic amino acids for protein synthesis during metamorphosis. It is a constituent of the sclerotizing system of the cuticle, and serves as a carrier for ecdysteroid hormone. This is Arylphorin subunit A4 from Calliphora vicina (Blue blowfly).